We begin with the raw amino-acid sequence, 353 residues long: Alanine racemase (353 aa).

Residue lysine 34 is the Proton acceptor; specific for D-alanine of the active site. Lysine 34 is modified (N6-(pyridoxal phosphate)lysine). Substrate is bound at residue arginine 128. Tyrosine 251 (proton acceptor; specific for L-alanine) is an active-site residue. Methionine 299 is a binding site for substrate.

Belongs to the alanine racemase family. Pyridoxal 5'-phosphate serves as cofactor.

The enzyme catalyses L-alanine = D-alanine. It functions in the pathway amino-acid biosynthesis; D-alanine biosynthesis; D-alanine from L-alanine: step 1/1. In terms of biological role, catalyzes the interconversion of L-alanine and D-alanine. May also act on other amino acids. The chain is Alanine racemase (alr) from Alcanivorax borkumensis (strain ATCC 700651 / DSM 11573 / NCIMB 13689 / SK2).